A 207-amino-acid chain; its full sequence is Ribonuclease HII (207 aa).

The region spanning 12-201 is the RNase H type-2 domain; sequence ALVAGVDEVG…VRELLDVVSI (190 aa). D18, E19, and D110 together coordinate a divalent metal cation.

It belongs to the RNase HII family. Mn(2+) is required as a cofactor. Mg(2+) serves as cofactor.

Its subcellular location is the cytoplasm. It catalyses the reaction Endonucleolytic cleavage to 5'-phosphomonoester.. In terms of biological role, endonuclease that specifically degrades the RNA of RNA-DNA hybrids. The protein is Ribonuclease HII of Azotobacter vinelandii (strain DJ / ATCC BAA-1303).